A 373-amino-acid chain; its full sequence is Nuclear hormone receptor family member nhr-69 (373 aa).

The segment at residues 3 to 78 (EEICHICNDK…AGMKSNAIQN (76 aa)) is a DNA-binding region (nuclear receptor). 2 NR C4-type zinc fingers span residues 6-26 (CHIC…CDGC) and 42-66 (CRFE…LQKC). Residues 93-344 (EKEDLIDQLV…SLMEELILND (252 aa)) form the NR LBD domain.

It belongs to the nuclear hormone receptor family. In terms of assembly, interacts with R-SMAD daf-8. In terms of tissue distribution, expressed in the ASI neurons, hypodermis, and in tail neurons.

It is found in the nucleus. In terms of biological role, orphan nuclear receptor which, in cooperation with R-SMAD daf-8, modulates the Insulin/IGF-1-like signaling (IIS) pathway, perhaps by regulating expression of the potassium channel exp-2, which in turn modulates the secretion of insulin-like peptide daf-28. The sequence is that of Nuclear hormone receptor family member nhr-69 (nhr-69) from Caenorhabditis elegans.